Consider the following 238-residue polypeptide: Ribosomal RNA small subunit methyltransferase G (238 aa).

Residues glycine 78, phenylalanine 83, alanine 129 to glutamate 130, and arginine 148 contribute to the S-adenosyl-L-methionine site. The tract at residues lysine 217–lysine 238 is disordered.

Belongs to the methyltransferase superfamily. RNA methyltransferase RsmG family.

It localises to the cytoplasm. Specifically methylates the N7 position of a guanine in 16S rRNA. The polypeptide is Ribosomal RNA small subunit methyltransferase G (Lactococcus lactis subsp. cremoris (strain SK11)).